A 419-amino-acid chain; its full sequence is Inward rectifier potassium channel 16 (419 aa).

The Cytoplasmic segment spans residues 1–67 (MSYYGSSYRI…MVDIFTTLVD (67 aa)). Residues 68 to 94 (TKWRHMFVIFSLSYILSWLIFGSIFWL) form a helical membrane-spanning segment. Residues 95–117 (IAFHHGDLLSDPDITPCVDNVHS) are Extracellular-facing. The segment at residues 118–134 (FTAAFLFSLETQTTIGY) is an intramembrane region (helical; Pore-forming). A Selectivity filter motif is present at residues 131 to 136 (TIGYGY). Residues 135 to 143 (GYRCVTEEC) lie on the Extracellular side of the membrane. Residues 144-171 (SVAVLTVILQSILSCIINTFIIGAALAK) form a helical membrane-spanning segment. The Cytoplasmic segment spans residues 172–419 (MATARKRAQT…LNRISMESQM (248 aa)). 3 positions are modified to phosphoserine: serine 358, serine 374, and serine 376.

It belongs to the inward rectifier-type potassium channel (TC 1.A.2.1) family. KCNJ16 subfamily. It forms heteromeric channels with Kir4.1/KCNJ10; this interaction is required for KCNJ16 localization to the basolateral membrane in kidney cells. As a heteromer with KCNJ10, may interact with MAGI1; this interaction may facilitate KCNJ10/KCNJ16 potassium channel expression at the basolateral membrane in kidney cells. May form heteromers with Kir2.1/KCNJ2. Can form heteromeric channels with Kir4.2/KCNJ15. In terms of tissue distribution, abundantly expressed in the proximal and distal segments of the nephron.

The protein localises to the membrane. Its subcellular location is the basolateral cell membrane. It carries out the reaction K(+)(in) = K(+)(out). Channel activity is strongly regulated by variations of cytosolic pH; channels are activated by alkaline and inhibited by acidic pH values. Activated by phosphatidylinositol 4,5 biphosphate (PtdIns(4,5)P2). In terms of biological role, inward rectifier potassium channels are characterized by a greater tendency to allow potassium to flow into the cell rather than out of it. Their voltage dependence is regulated by the concentration of extracellular potassium; as external potassium is raised, the voltage range of the channel opening shifts to more positive voltages. The inward rectification is mainly due to the blockage of outward current by internal magnesium. KCNJ16 may be involved in the regulation of fluid and pH balance. In the kidney, together with KCNJ10, mediates basolateral K(+) recycling in distal tubules; this process is critical for Na(+) reabsorption at the tubules. In Mus musculus (Mouse), this protein is Inward rectifier potassium channel 16 (Kcnj16).